Consider the following 1012-residue polypeptide: Ubiquitin-activating enzyme E1 1 (1012 aa).

Residue R22 coordinates ATP. Position 264 is a phosphoserine (S264). 2 residues coordinate ATP: A437 and D463. Positions 465 and 468 each coordinate Mg(2+). The ATP site is built by N471, R474, K487, V513, D537, and N538. Position 537 (D537) interacts with Mg(2+). K588 is covalently cross-linked (Glycyl lysine isopeptide (Lys-Gly) (interchain with G-Cter in ubiquitin)). The active-site Glycyl thioester intermediate is C593. Phosphoserine is present on S903.

The protein belongs to the ubiquitin-activating E1 family. Monomer. Interacts with the E2 ubiquitin-conjugating enzyme ubc4.

The protein localises to the cytoplasm. The protein resides in the nucleus. The catalysed reaction is ATP + ubiquitin + [E1 ubiquitin-activating enzyme]-L-cysteine = AMP + diphosphate + S-ubiquitinyl-[E1 ubiquitin-activating enzyme]-L-cysteine.. Its pathway is protein modification; protein ubiquitination. Its activity is regulated as follows. Ubiquitin transfer between the E1 ubiquitin-activating enzyme ptr3 and E2 ubiquitin-conjugating enzyme ubc4 is enhanced by the presence of magnesium and ATP, or adenylated ubiquitin. Its function is as follows. E1 ubiquitin-activating enzyme that catalyzes the first step in ubiquitin conjugation to mark cellular proteins for degradation through the ubiquitin-proteasome system. Activates ubiquitin by first adenylating its C-terminal glycine residue with ATP, and thereafter linking this residue to the side chain of a cysteine residue in E1, yielding a ubiquitin-E1 thioester and free AMP. This chain is Ubiquitin-activating enzyme E1 1 (ptr3), found in Schizosaccharomyces pombe (strain 972 / ATCC 24843) (Fission yeast).